We begin with the raw amino-acid sequence, 102 residues long: NADH-quinone oxidoreductase subunit K 1 (102 aa).

Transmembrane regions (helical) follow at residues 3-23 (TLTT…LGIL), 29-49 (VGML…FMAF), and 62-82 (IIAL…LSII).

This sequence belongs to the complex I subunit 4L family. As to quaternary structure, NDH-1 is composed of 14 different subunits. Subunits NuoA, H, J, K, L, M, N constitute the membrane sector of the complex.

It localises to the cell inner membrane. The enzyme catalyses a quinone + NADH + 5 H(+)(in) = a quinol + NAD(+) + 4 H(+)(out). Functionally, NDH-1 shuttles electrons from NADH, via FMN and iron-sulfur (Fe-S) centers, to quinones in the respiratory chain. The immediate electron acceptor for the enzyme in this species is believed to be ubiquinone. Couples the redox reaction to proton translocation (for every two electrons transferred, four hydrogen ions are translocated across the cytoplasmic membrane), and thus conserves the redox energy in a proton gradient. In Syntrophobacter fumaroxidans (strain DSM 10017 / MPOB), this protein is NADH-quinone oxidoreductase subunit K 1.